Consider the following 252-residue polypeptide: uncharacterized protein (252 aa).

A signal peptide spans 1–25 (MRKKKFLSRFAFGSLFLLCGTILSA). Cys26 carries the N-palmitoyl cysteine lipid modification. Cys26 carries the S-diacylglycerol cysteine lipid modification.

It belongs to the MG439/MG440 family.

The protein resides in the cell membrane. This is an uncharacterized protein from Mycoplasma pneumoniae (strain ATCC 29342 / M129 / Subtype 1) (Mycoplasmoides pneumoniae).